Consider the following 417-residue polypeptide: Serine hydroxymethyltransferase (417 aa).

(6S)-5,6,7,8-tetrahydrofolate is bound by residues Leu121 and 125 to 127 (GHL). Lys229 is modified (N6-(pyridoxal phosphate)lysine). 355 to 357 (SPF) contacts (6S)-5,6,7,8-tetrahydrofolate.

Belongs to the SHMT family. As to quaternary structure, homodimer. Pyridoxal 5'-phosphate serves as cofactor.

The protein localises to the cytoplasm. It catalyses the reaction (6R)-5,10-methylene-5,6,7,8-tetrahydrofolate + glycine + H2O = (6S)-5,6,7,8-tetrahydrofolate + L-serine. Its pathway is one-carbon metabolism; tetrahydrofolate interconversion. It functions in the pathway amino-acid biosynthesis; glycine biosynthesis; glycine from L-serine: step 1/1. Functionally, catalyzes the reversible interconversion of serine and glycine with tetrahydrofolate (THF) serving as the one-carbon carrier. This reaction serves as the major source of one-carbon groups required for the biosynthesis of purines, thymidylate, methionine, and other important biomolecules. Also exhibits THF-independent aldolase activity toward beta-hydroxyamino acids, producing glycine and aldehydes, via a retro-aldol mechanism. This chain is Serine hydroxymethyltransferase, found in Serratia proteamaculans (strain 568).